The sequence spans 354 residues: Elongation factor Ts (354 aa).

Residues T81 to V84 form an involved in Mg(2+) ion dislocation from EF-Tu region.

Belongs to the EF-Ts family.

It localises to the cytoplasm. Its function is as follows. Associates with the EF-Tu.GDP complex and induces the exchange of GDP to GTP. It remains bound to the aminoacyl-tRNA.EF-Tu.GTP complex up to the GTP hydrolysis stage on the ribosome. This chain is Elongation factor Ts, found in Campylobacter curvus (strain 525.92).